The primary structure comprises 599 residues: Omega-hydroxyceramide transacylase (599 aa).

The PNPLA domain occupies 16–185 (ISFSGSGFLS…TSMQPCSFWT (170 aa)). The GXSXG motif lies at 51–55 (GTSAG). Residue S53 is the Nucleophile of the active site. Catalysis depends on D172, which acts as the Proton acceptor. Positions 172-174 (DGG) match the DGA/G motif. Positions 289-563 (PPPPSLQNLP…PASKLKSAPC (275 aa)) are disordered. 2 stretches are compositionally biased toward polar residues: residues 325–335 (SSAAPSVQTPE) and 350–362 (VSIS…SPLS). Positions 443 to 454 (SPESPRLLLRSS) are enriched in low complexity. Pro residues predominate over residues 468–478 (PLSPSTPPAGP). Positions 490-501 (ATGSPALSQLTG) are enriched in polar residues. Over residues 551–563 (SKKPASKLKSAPC) the composition is skewed to low complexity.

In terms of tissue distribution, specifically expressed in skin by keratinocytes, at the boundary area between the nucleated stratum granulosum and the denucleated stratum corneum in the epidermis (at protein level). Also expressed in stomach and other surface lining tissues like intestine and tongue. Also detected in testis as well as in other tissues but at very low level.

The protein resides in the cytoplasm. The catalysed reaction is an N-(omega-hydroxy-ultra-long chain fatty acyl)-sphingoid base + a (9Z,12Z)-octadecadienoyl-containing triacyl-sn-glycerol = an N-[omega-(9Z,12Z-octadecadienoyloxy)-O-ultra-long chain fatty acyl]-sphingoid base + a diacylglycerol. It catalyses the reaction an N-(omega-hydroxy-ultra-long chain fatty acyl)-sphing-4-enine + a (9Z,12Z)-octadecadienoyl-containing triacyl-sn-glycerol = an N-(omega-(9Z,12Z-octadecadienoyloxy)-ultra-long chain fatty acyl)-sphing-4-enine + a diacylglycerol. It carries out the reaction N-(28-hydroxyoctacosanoyl)-sphing-4-enine + a (9Z,12Z)-octadecadienoyl-containing triacyl-sn-glycerol = N-(28-(9Z,12Z-octadecadienoyloxy)-octacosanoyl)-sphing-4-enine + a diacylglycerol. The enzyme catalyses N-(30-hydroxytriacontanoyl)-sphing-4-enine + 1,2,3-tri-(9Z,12Z)-octadecadienoylglycerol = N-[30-(9Z,12Z-octadecadienoyloxy)-triacontanoyl]-sphing-4-enine + di-(9Z,12Z)-octadecadienoylglycerol. The catalysed reaction is N-(32-hydroxydotriacontanoyl)-sphing-4-enine + a (9Z,12Z)-octadecadienoyl-containing triacyl-sn-glycerol = N-(32-(9Z,12Z-octadecadienoyloxy)-dotricontanoyl)-sphing-4-enine + a diacylglycerol. It catalyses the reaction N-(32-hydroxydotriacontenoyl)-sphing-4-enine + a (9Z,12Z)-octadecadienoyl-containing triacyl-sn-glycerol = an N-(32-(9Z,12Z-octadecadienoyloxy)-dotriacontenoyl)-sphing-4-enine + a diacylglycerol. It carries out the reaction an N-(34-hydroxytetratriacontenoyl)-sphing-4-enine + a (9Z,12Z)-octadecadienoyl-containing triacyl-sn-glycerol = an N-(34-(9Z,12Z-octadecadienoyloxy)-tetratriacontenoyl)-sphing-4-enine + a diacylglycerol. The enzyme catalyses an N-(34-hydroxytetratriacontadienoyl)-sphing-4-enine + a (9Z,12Z)-octadecadienoyl-containing triacyl-sn-glycerol = an N-(34-(9Z,12Z-octadecadienoyloxy)-tetratriacontadienoyl)-sphing-4-enine + a diacylglycerol. The catalysed reaction is an N-(36-hydroxyhexatriacontenoyl)-sphing-4-enine + a (9Z,12Z)-octadecadienoyl-containing triacyl-sn-glycerol = an N-(36-(9Z,12Z-octadecadienoyloxy)-hexatriacontenoyl)-sphing-4-enine + a diacylglycerol. It catalyses the reaction an N-(36-hydroxyhexatriacontadienoyl)-sphing-4-enine + a (9Z,12Z)-octadecadienoyl-containing triacyl-sn-glycerol = an N-(36-(9Z,12Z-octadecadienoyloxy)-hexatriacontadienoyl)-sphing-4-enine + a diacylglycerol. It carries out the reaction an N-(38-hydroxyoctatriacontenoyl)-sphing-4-enine + a (9Z,12Z)-octadecadienoyl-containing triacyl-sn-glycerol = an N-(38-(9Z,12Z-octadecadienoyloxy)-octatriacontenoyl)-sphing-4-enine + a diacylglycerol. Functionally, omega-hydroxyceramide transacylase involved in the synthesis of omega-O-acylceramides (esterified omega-hydroxyacyl-sphingosine; EOS), which are extremely hydrophobic lipids involved in skin barrier formation. Catalyzes the last step of the synthesis of omega-O-acylceramides by transferring linoleic acid from triglycerides to an omega-hydroxyceramide. Omega-O-acylceramides, are required for the biogenesis of lipid lamellae in the stratum corneum and the formation of the cornified lipid envelope which are essential for the epidermis barrier function. These lipids also play a role in keratinocyte differentiation. May also act on omega-hydroxylated ultra-long chain fatty acids (omega-OH ULCFA) and acylglucosylceramides (GlcEOS). In Mus musculus (Mouse), this protein is Omega-hydroxyceramide transacylase.